The chain runs to 709 residues: Elongation factor G (709 aa).

Residues 9–295 (AKVRNIGIMA…AVVRYLPTPL (287 aa)) enclose the tr-type G domain. Residues 18 to 25 (AHIDAGKT), 86 to 90 (DTPGH), and 140 to 143 (NKLD) each bind GTP.

The protein belongs to the TRAFAC class translation factor GTPase superfamily. Classic translation factor GTPase family. EF-G/EF-2 subfamily.

It localises to the cytoplasm. In terms of biological role, catalyzes the GTP-dependent ribosomal translocation step during translation elongation. During this step, the ribosome changes from the pre-translocational (PRE) to the post-translocational (POST) state as the newly formed A-site-bound peptidyl-tRNA and P-site-bound deacylated tRNA move to the P and E sites, respectively. Catalyzes the coordinated movement of the two tRNA molecules, the mRNA and conformational changes in the ribosome. The protein is Elongation factor G of Streptomyces avermitilis (strain ATCC 31267 / DSM 46492 / JCM 5070 / NBRC 14893 / NCIMB 12804 / NRRL 8165 / MA-4680).